We begin with the raw amino-acid sequence, 330 residues long: ATP-dependent Clp protease proteolytic subunit-related protein 3, chloroplastic (330 aa).

The transit peptide at 1–43 (MASCLQASMNSLLPRSSSFSPHPPLSSNSSGRRNLKTFRYAFR) directs the protein to the chloroplast. Residues 7-32 (ASMNSLLPRSSSFSPHPPLSSNSSGR) are disordered. Positions 8-30 (SMNSLLPRSSSFSPHPPLSSNSS) are enriched in low complexity.

The protein belongs to the peptidase S14 family. In terms of assembly, component of the chloroplastic Clp protease core complex which consist of at least 16 proteins: CLPP4 (3 copies), CLPP5 (3 copies), CLPR4 (2 copies), ClpP1 (1 copy), CLPP6 (1 copy), CLPR2 (1 copy), CLPT1 (1 copy), CLPT2 (1 copy) and 3 copies of CLPP3 and/or CLPR1 and/or CLPR3. The core complex is organized in two heptameric rings, one containing CLPP3,4,5,6 in a 1:2:3:1 ratio and the other CLPP1 and CLPR1,2,3,4 in a 3:1:1:1:1 ratio.

It localises to the plastid. The protein localises to the chloroplast. This is ATP-dependent Clp protease proteolytic subunit-related protein 3, chloroplastic from Arabidopsis thaliana (Mouse-ear cress).